A 362-amino-acid polypeptide reads, in one-letter code: Aminomethyltransferase (362 aa).

This sequence belongs to the GcvT family. In terms of assembly, the glycine cleavage system is composed of four proteins: P, T, L and H.

The catalysed reaction is N(6)-[(R)-S(8)-aminomethyldihydrolipoyl]-L-lysyl-[protein] + (6S)-5,6,7,8-tetrahydrofolate = N(6)-[(R)-dihydrolipoyl]-L-lysyl-[protein] + (6R)-5,10-methylene-5,6,7,8-tetrahydrofolate + NH4(+). The glycine cleavage system catalyzes the degradation of glycine. This chain is Aminomethyltransferase, found in Listeria monocytogenes serotype 4a (strain HCC23).